The chain runs to 219 residues: Ribosomal RNA large subunit methyltransferase E (219 aa).

S-adenosyl-L-methionine is bound by residues glycine 60, tryptophan 62, aspartate 85, aspartate 101, and aspartate 126. The Proton acceptor role is filled by lysine 166.

This sequence belongs to the class I-like SAM-binding methyltransferase superfamily. RNA methyltransferase RlmE family.

It is found in the cytoplasm. The enzyme catalyses uridine(2552) in 23S rRNA + S-adenosyl-L-methionine = 2'-O-methyluridine(2552) in 23S rRNA + S-adenosyl-L-homocysteine + H(+). Functionally, specifically methylates the uridine in position 2552 of 23S rRNA at the 2'-O position of the ribose in the fully assembled 50S ribosomal subunit. This chain is Ribosomal RNA large subunit methyltransferase E, found in Bordetella avium (strain 197N).